Here is a 142-residue protein sequence, read N- to C-terminus: Large ribosomal subunit protein uL13 (142 aa).

This sequence belongs to the universal ribosomal protein uL13 family. Part of the 50S ribosomal subunit.

In terms of biological role, this protein is one of the early assembly proteins of the 50S ribosomal subunit, although it is not seen to bind rRNA by itself. It is important during the early stages of 50S assembly. The protein is Large ribosomal subunit protein uL13 of Burkholderia pseudomallei (strain 1106a).